Reading from the N-terminus, the 1148-residue chain is Pyruvate carboxylase (1148 aa).

The 457-residue stretch at 1-457 (MSQQSIQKVL…DTSFIDTTPE (457 aa)) folds into the Biotin carboxylation domain. Positions 121, 205, and 240 each coordinate ATP. Positions 125-321 (REQAEKAGIP…IVQTQILVAQ (197 aa)) constitute an ATP-grasp domain. Lys242 is a catalytic residue. The region spanning 534–802 (VLLTDTTFRD…RPEMNVQGVE (269 aa)) is the Pyruvate carboxyltransferase domain. Residues 542 to 546 (RDAHQ) and Arg615 each bind substrate. An a divalent metal cation-binding site is contributed by Asp543. Residues Lys712, His741, and His743 each coordinate a divalent metal cation. N6-carboxylysine is present on Lys712. Thr876 contacts substrate. The Biotinyl-binding domain maps to 1071–1146 (KADRTNPSHI…QTGDLLLEIE (76 aa)). At Lys1112 the chain carries N6-biotinyllysine.

As to quaternary structure, homotetramer. At very low potassium concentrations, when intracellular levels of c-di-AMP are low, interacts with apo-DarB. c-di-AMP inhibits the binding of DarB to PYC. Does not bind directly c-di-AMP. Biotin is required as a cofactor.

The catalysed reaction is hydrogencarbonate + pyruvate + ATP = oxaloacetate + ADP + phosphate + H(+). With respect to regulation, activated by the cyclic di-AMP (c-di-AMP) receptor DarB in the absence of c-di-AMP. Allosterically activated by acetyl-CoA. Inhibited by the biotin-complexing protein avidin. Its function is as follows. Catalyzes a 2-step reaction, involving the ATP-dependent carboxylation of the covalently attached biotin in the first step and the transfer of the carboxyl group to pyruvate in the second, leading to oxaloacetate production. Fulfills an anaplerotic function in B.subtilis as it is necessary for growth on glucose, but is not required for sporulation. The chain is Pyruvate carboxylase (pyc) from Bacillus subtilis (strain 168).